We begin with the raw amino-acid sequence, 789 residues long: Fibrinogen alpha chain (789 aa).

An N-terminal signal peptide occupies residues 1–19 (MLSLRVTCLILSVASTVWT). S46 carries the phosphoserine modification. Residues 69–554 (CRMKGLIDEA…GRARARPTRD (486 aa)) are a coiled coil. Composition is skewed to basic and acidic residues over residues 263-287 (ERPG…RGDF) and 384-396 (KGDK…KEKV). Residues 263–420 (ERPGKDGGSR…TITKTVTGPD (158 aa)) form a disordered region. A compositionally biased stretch (polar residues) spans 397 to 416 (TSSGTSTTHRSCSKTITKTV). Cysteines 408 and 438 form a disulfide. S447 bears the Phosphoserine mark. P504 carries the 4-hydroxyproline; by P4HA1 modification. Over residues 526 to 541 (ADEAGSEAHREGETRN) the composition is skewed to basic and acidic residues. Residues 526 to 555 (ADEAGSEAHREGETRNTKRGRARARPTRDC) form a disordered region. A Fibrinogen C-terminal domain is found at 546-787 (RARARPTRDC…AVRMKIRPLV (242 aa)). An N-linked (GlcNAc...) asparagine glycan is attached at N609. Residues D714, D716, W718, and E720 each contribute to the Ca(2+) site. A disulfide bond links C722 and C735.

In terms of assembly, heterohexamer; disulfide linked. Contains 2 sets of 3 non-identical chains (alpha, beta and gamma). The 2 heterotrimers are in head to head conformation with the N-termini in a small central domain. Post-translationally, conversion of fibrinogen to fibrin is triggered by thrombin, which cleaves fibrinopeptides A and B from alpha and beta chains, and thus exposes the N-terminal polymerization sites responsible for the formation of the soft clot. The soft clot is converted into the hard clot by factor XIIIA which catalyzes the epsilon-(gamma-glutamyl)lysine cross-linking between gamma chains (stronger) and between alpha chains (weaker) of different monomers. Forms F13A-mediated cross-links between a glutamine and the epsilon-amino group of a lysine residue, forming fibronectin-fibrinogen heteropolymers. In terms of processing, phosphorylated by FAM20C in the extracellular medium. Expressed in liver.

The protein localises to the secreted. Cleaved by the protease thrombin to yield monomers which, together with fibrinogen beta (FGB) and fibrinogen gamma (FGG), polymerize to form an insoluble fibrin matrix. Fibrin has a major function in hemostasis as one of the primary components of blood clots. In addition, functions during the early stages of wound repair to stabilize the lesion and guide cell migration during re-epithelialization. Was originally thought to be essential for platelet aggregation, based on in vitro studies using anticoagulated blood. However, subsequent studies have shown that it is not absolutely required for thrombus formation in vivo. Enhances expression of SELP in activated platelets via an ITGB3-dependent pathway. Maternal fibrinogen is essential for successful pregnancy. Fibrin deposition is also associated with infection, where it protects against IFNG-mediated hemorrhage. May also facilitate the immune response via both innate and T-cell mediated pathways. The chain is Fibrinogen alpha chain from Mus musculus (Mouse).